Consider the following 521-residue polypeptide: MGEITRALISVSDKRGVVEFARRLQDFGVEILSTGGTAKALMADGVAVQEVGDYTGFPELLEGRLKTLHPKIHGGLLAKRDDSSHTRQMAEYGIPAIDLLCVNLYPFAETIASADCTLEEAMENIDIGGPTMLRAAAKNWEGVTVLVDPDDYAAVLQEMEQSYGGVGASTRFRLATKVFAHTARYDGAIANYLSSLGPDGNRTTFPQTLSLQFKKAQDLRYGENPHQAAAFYRDGSGGGLADAHQLQGKELSYNNIGDGDAAVALVMEFAEPACCVVKHGNPCGVAVGPDLLGAYQRAWAGDPISAFGGIVACNRPLDAQTAELISDQFIEMVLAPAILPDARPILAKRKNLRVLAFDDGRAWRRTGWDYKRVRGGLLVQNFDQAMEAETDWKVVSERAPTVQEARDLAFVWRVGKYVRSNAIVYGREGQTVGIGAGQMSRVDAARCGVAKALELGFDLHGAALASDAFFPFRDGIDAAAAAGVKAIIQPGGSIRDEEVIASANEHGIAMVFTGVRHFRHG.

Positions 1 to 147 constitute an MGS-like domain; the sequence is MGEITRALIS…KNWEGVTVLV (147 aa).

Belongs to the PurH family.

It catalyses the reaction (6R)-10-formyltetrahydrofolate + 5-amino-1-(5-phospho-beta-D-ribosyl)imidazole-4-carboxamide = 5-formamido-1-(5-phospho-D-ribosyl)imidazole-4-carboxamide + (6S)-5,6,7,8-tetrahydrofolate. The enzyme catalyses IMP + H2O = 5-formamido-1-(5-phospho-D-ribosyl)imidazole-4-carboxamide. It functions in the pathway purine metabolism; IMP biosynthesis via de novo pathway; 5-formamido-1-(5-phospho-D-ribosyl)imidazole-4-carboxamide from 5-amino-1-(5-phospho-D-ribosyl)imidazole-4-carboxamide (10-formyl THF route): step 1/1. Its pathway is purine metabolism; IMP biosynthesis via de novo pathway; IMP from 5-formamido-1-(5-phospho-D-ribosyl)imidazole-4-carboxamide: step 1/1. In Acidithiobacillus ferrooxidans (strain ATCC 53993 / BNL-5-31) (Leptospirillum ferrooxidans (ATCC 53993)), this protein is Bifunctional purine biosynthesis protein PurH.